We begin with the raw amino-acid sequence, 103 residues long: Large ribosomal subunit protein bL21 (103 aa).

The protein belongs to the bacterial ribosomal protein bL21 family. Part of the 50S ribosomal subunit. Contacts protein L20.

Functionally, this protein binds to 23S rRNA in the presence of protein L20. This chain is Large ribosomal subunit protein bL21, found in Alcanivorax borkumensis (strain ATCC 700651 / DSM 11573 / NCIMB 13689 / SK2).